We begin with the raw amino-acid sequence, 463 residues long: Glutamate-1-semialdehyde 2,1-aminomutase, chloroplastic (463 aa).

Residues 1–30 constitute a chloroplast transit peptide; the sequence is MQMQLNAKTVQGAFKAQRPRSVRGNVAVRA. The residue at position 303 (K303) is an N6-(pyridoxal phosphate)lysine.

The protein belongs to the class-III pyridoxal-phosphate-dependent aminotransferase family. HemL subfamily. As to quaternary structure, homodimer. The cofactor is pyridoxal 5'-phosphate.

The protein resides in the plastid. Its subcellular location is the chloroplast. The enzyme catalyses (S)-4-amino-5-oxopentanoate = 5-aminolevulinate. Its pathway is porphyrin-containing compound metabolism; protoporphyrin-IX biosynthesis; 5-aminolevulinate from L-glutamyl-tRNA(Glu): step 2/2. The protein operates within porphyrin-containing compound metabolism; chlorophyll biosynthesis. In Chlamydomonas reinhardtii (Chlamydomonas smithii), this protein is Glutamate-1-semialdehyde 2,1-aminomutase, chloroplastic (GSA).